Reading from the N-terminus, the 122-residue chain is Small ribosomal subunit protein uS12c (122 aa).

The protein belongs to the universal ribosomal protein uS12 family. In terms of assembly, part of the 30S ribosomal subunit.

It localises to the plastid. The protein resides in the chloroplast. In terms of biological role, with S4 and S5 plays an important role in translational accuracy. Located at the interface of the 30S and 50S subunits. This is Small ribosomal subunit protein uS12c (rps12) from Chloranthus spicatus (Chulantree).